Here is a 412-residue protein sequence, read N- to C-terminus: uncharacterized protein (412 aa).

Disordered stretches follow at residues 150 to 171, 177 to 196, and 302 to 412; these read NTPG…QLGD, QITS…QQQQ, and QAQQ…PLNP. Positions 156 to 168 are enriched in low complexity; that stretch reads QAQQQQQQQQQQQ. Composition is skewed to polar residues over residues 177-187 and 310-321; these read QITSSNNSGNS and MGSSPTHSSPTI. Over residues 335–345 the composition is skewed to low complexity; sequence GGIINTNTNLN. Polar residues predominate over residues 350-363; that stretch reads VSPNQPMPNSSPIL. 2 stretches are compositionally biased toward low complexity: residues 364–373 and 381–394; these read PTNASSVVPP and TSNN…TTSP.

This is an uncharacterized protein from Dictyostelium discoideum (Social amoeba).